The sequence spans 493 residues: Glutamyl-tRNA(Gln) amidotransferase subunit A (493 aa).

Residues Lys-78 and Ser-158 each act as charge relay system in the active site. Ser-182 serves as the catalytic Acyl-ester intermediate.

It belongs to the amidase family. GatA subfamily. Heterotrimer of A, B and C subunits.

The catalysed reaction is L-glutamyl-tRNA(Gln) + L-glutamine + ATP + H2O = L-glutaminyl-tRNA(Gln) + L-glutamate + ADP + phosphate + H(+). In terms of biological role, allows the formation of correctly charged Gln-tRNA(Gln) through the transamidation of misacylated Glu-tRNA(Gln) in organisms which lack glutaminyl-tRNA synthetase. The reaction takes place in the presence of glutamine and ATP through an activated gamma-phospho-Glu-tRNA(Gln). The sequence is that of Glutamyl-tRNA(Gln) amidotransferase subunit A from Azorhizobium caulinodans (strain ATCC 43989 / DSM 5975 / JCM 20966 / LMG 6465 / NBRC 14845 / NCIMB 13405 / ORS 571).